We begin with the raw amino-acid sequence, 324 residues long: Acetyl-coenzyme A carboxylase carboxyl transferase subunit alpha (324 aa).

One can recognise a CoA carboxyltransferase C-terminal domain in the interval 44 to 297 (LEERAKQLRY…KAALLRNLAE (254 aa)).

This sequence belongs to the AccA family. Acetyl-CoA carboxylase is a heterohexamer composed of biotin carboxyl carrier protein (AccB), biotin carboxylase (AccC) and two subunits each of ACCase subunit alpha (AccA) and ACCase subunit beta (AccD).

The protein localises to the cytoplasm. It carries out the reaction N(6)-carboxybiotinyl-L-lysyl-[protein] + acetyl-CoA = N(6)-biotinyl-L-lysyl-[protein] + malonyl-CoA. It functions in the pathway lipid metabolism; malonyl-CoA biosynthesis; malonyl-CoA from acetyl-CoA: step 1/1. Its function is as follows. Component of the acetyl coenzyme A carboxylase (ACC) complex. First, biotin carboxylase catalyzes the carboxylation of biotin on its carrier protein (BCCP) and then the CO(2) group is transferred by the carboxyltransferase to acetyl-CoA to form malonyl-CoA. The sequence is that of Acetyl-coenzyme A carboxylase carboxyl transferase subunit alpha from Thermosynechococcus vestitus (strain NIES-2133 / IAM M-273 / BP-1).